Reading from the N-terminus, the 110-residue chain is Dermcidin (110 aa).

Positions 1–19 (MRFMTLLFLTALAGALVCA) are cleaved as a signal peptide. The segment at 24–70 (AASAPGSGNPCHEASAAQKENAGEDPGLARQAPKPRKQRSSLLEKGL) is disordered. S30 and S38 each carry an O-linked (Xyl...) (chondroitin sulfate) serine glycan. The propeptide occupies 50-62 (GLARQAPKPRKQR). The helical transmembrane segment at 64–108 (SLLEKGLDGAKKAVGGLGKLGKDAVEDLESVGKGAVHDVKDVLDS) threads the bilayer. Residue E67 coordinates Zn(2+). The residue at position 68 (K68) is an N6-acetyllysine. The Zn(2+) site is built by D71, D86, D90, H100, and D104. Residue L110 is a propeptide.

In terms of assembly, homohexamer. It depends on Mn(2+) as a cofactor. Zn(2+) serves as cofactor. In terms of tissue distribution, detected in urine (at protein level). Constitutively expressed in eccrine sweat gland cells (at protein level). Secreted into the sweat at a concentration of 1-10 micrograms/ml.

It is found in the secreted. It localises to the membrane. Found in sweat, has an antimicrobial activity during early bacterial colonization. The secreted peptide assembles into homohexameric complexes that can associate with and also insert into pathogen membranes. Once inserted in bacteria membranes forms anion channels probably altering the transmembrane potential essential for bacterial survival. Highly effective against E.coli, E.faecalis, S.aureus and C.albicans. Optimal pH and salt concentration resemble the conditions in sweat. Also exhibits proteolytic activity, cleaving on the C-terminal side of Arg and, to a lesser extent, Lys residues. Its function is as follows. Promotes survival of neurons and displays phosphatase activity. It may bind IgG. This is Dermcidin from Homo sapiens (Human).